Reading from the N-terminus, the 245-residue chain is Ubiquinone/menaquinone biosynthesis C-methyltransferase UbiE (245 aa).

S-adenosyl-L-methionine is bound by residues T71, D92, and 118-119; that span reads DA.

Belongs to the class I-like SAM-binding methyltransferase superfamily. MenG/UbiE family.

It catalyses the reaction a 2-demethylmenaquinol + S-adenosyl-L-methionine = a menaquinol + S-adenosyl-L-homocysteine + H(+). It carries out the reaction a 2-methoxy-6-(all-trans-polyprenyl)benzene-1,4-diol + S-adenosyl-L-methionine = a 5-methoxy-2-methyl-3-(all-trans-polyprenyl)benzene-1,4-diol + S-adenosyl-L-homocysteine + H(+). Its pathway is quinol/quinone metabolism; menaquinone biosynthesis; menaquinol from 1,4-dihydroxy-2-naphthoate: step 2/2. The protein operates within cofactor biosynthesis; ubiquinone biosynthesis. In terms of biological role, methyltransferase required for the conversion of demethylmenaquinol (DMKH2) to menaquinol (MKH2) and the conversion of 2-polyprenyl-6-methoxy-1,4-benzoquinol (DDMQH2) to 2-polyprenyl-3-methyl-6-methoxy-1,4-benzoquinol (DMQH2). This chain is Ubiquinone/menaquinone biosynthesis C-methyltransferase UbiE, found in Neisseria meningitidis serogroup B (strain ATCC BAA-335 / MC58).